Here is a 428-residue protein sequence, read N- to C-terminus: Cysteine synthase 2 (428 aa).

The chain crosses the membrane as a helical span at residues 7–27 (IYIGSAFVAGVVLTIAFKDLF). The residue at position 106 (K106) is an N6-(pyridoxal phosphate)lysine. Residues 260–264 (GTGGT) and S367 contribute to the pyridoxal 5'-phosphate site.

It belongs to the cysteine synthase/cystathionine beta-synthase family. The cofactor is pyridoxal 5'-phosphate.

Its subcellular location is the mitochondrion outer membrane. The enzyme catalyses O-acetyl-L-serine + hydrogen sulfide = L-cysteine + acetate. In terms of biological role, putative cysteine synthase that catalyzes the conversion of O-acetyl-L-serine (OAS) into cysteine, the last step in the cysteine biosynthesis pathway. However, in contrast to cysteine synthase cysB, this CS-like protein seems not to function in cysteine biosynthesis. This is Cysteine synthase 2 from Emericella nidulans (strain FGSC A4 / ATCC 38163 / CBS 112.46 / NRRL 194 / M139) (Aspergillus nidulans).